The chain runs to 262 residues: Small ribosomal subunit protein eS4 (262 aa).

In terms of domain architecture, S4 RNA-binding spans Leu-42 to Asp-104.

Belongs to the eukaryotic ribosomal protein eS4 family.

The protein localises to the cytoplasm. The sequence is that of Small ribosomal subunit protein eS4 (RPS4) from Gossypium hirsutum (Upland cotton).